Consider the following 388-residue polypeptide: Succinate--CoA ligase [ADP-forming] subunit beta (388 aa).

An ATP-grasp domain is found at 9 to 244; sequence KQLFKEFGLP…PSQDDAREAE (236 aa). Residues lysine 46, 53 to 55, glutamate 99, threonine 102, and glutamate 107 each bind ATP; that span reads GRG. Mg(2+)-binding residues include asparagine 199 and aspartate 213. Residues asparagine 264 and 321–323 contribute to the substrate site; that span reads GIV.

Belongs to the succinate/malate CoA ligase beta subunit family. As to quaternary structure, heterotetramer of two alpha and two beta subunits. Mg(2+) serves as cofactor.

The enzyme catalyses succinate + ATP + CoA = succinyl-CoA + ADP + phosphate. The catalysed reaction is GTP + succinate + CoA = succinyl-CoA + GDP + phosphate. It functions in the pathway carbohydrate metabolism; tricarboxylic acid cycle; succinate from succinyl-CoA (ligase route): step 1/1. Functionally, succinyl-CoA synthetase functions in the citric acid cycle (TCA), coupling the hydrolysis of succinyl-CoA to the synthesis of either ATP or GTP and thus represents the only step of substrate-level phosphorylation in the TCA. The beta subunit provides nucleotide specificity of the enzyme and binds the substrate succinate, while the binding sites for coenzyme A and phosphate are found in the alpha subunit. This is Succinate--CoA ligase [ADP-forming] subunit beta from Idiomarina loihiensis (strain ATCC BAA-735 / DSM 15497 / L2-TR).